We begin with the raw amino-acid sequence, 199 residues long: MNILQINSSARSDASNSTRVANSIVERLRASHPGAAVVVRSLAQNPHPVLDEAALGALFTPADKRTPEQTARVALDDVLIAEIQAADAVVIGVPMYNFGVPVQLKNWIDAITRVKVTFRYTANGPEGLLKDKKVYVAFARGGRYRDTPADTQVPYLKTIFGFLGMTDVHFVFAEGLAMGADAAEQAFAEAERDIEAALA.

Residues serine 9, 15–17 (SNS), and 95–98 (MYNF) each bind FMN.

Belongs to the azoreductase type 1 family. As to quaternary structure, homodimer. FMN serves as cofactor.

The enzyme catalyses 2 a quinone + NADH + H(+) = 2 a 1,4-benzosemiquinone + NAD(+). It catalyses the reaction N,N-dimethyl-1,4-phenylenediamine + anthranilate + 2 NAD(+) = 2-(4-dimethylaminophenyl)diazenylbenzoate + 2 NADH + 2 H(+). In terms of biological role, quinone reductase that provides resistance to thiol-specific stress caused by electrophilic quinones. Its function is as follows. Also exhibits azoreductase activity. Catalyzes the reductive cleavage of the azo bond in aromatic azo compounds to the corresponding amines. This chain is FMN-dependent NADH:quinone oxidoreductase, found in Aromatoleum aromaticum (strain DSM 19018 / LMG 30748 / EbN1) (Azoarcus sp. (strain EbN1)).